A 222-amino-acid polypeptide reads, in one-letter code: Interleukin-12 subunit alpha (222 aa).

The signal sequence occupies residues 1–25 (MCPPRGLLLVAILVLLNHLDHLSLA). Disulfide bonds link Cys-40-Cys-113, Cys-67-Cys-199, and Cys-88-Cys-126. N-linked (GlcNAc...) asparagine glycans are attached at residues Asn-42, Asn-96, and Asn-110.

Belongs to the IL-6 superfamily. Heterodimer with IL12B; disulfide-linked. This heterodimer is known as interleukin IL-12. Heterodimer with EBI3/IL27B; not disulfide-linked. This heterodimer is known as interleukin IL-35. Interacts with NBR1; this interaction promotes IL-12 secretion.

Its subcellular location is the secreted. Functionally, heterodimerizes with IL12B to form the IL-12 cytokine or with EBI3/IL27B to form the IL-35 cytokine. IL-12 is primarily produced by professional antigen-presenting cells (APCs) such as B-cells and dendritic cells (DCs) as well as macrophages and granulocytes and regulates T-cell and natural killer-cell responses, induces the production of interferon-gamma (IFN-gamma), favors the differentiation of T-helper 1 (Th1) cells and is an important link between innate resistance and adaptive immunity. Mechanistically, exerts its biological effects through a receptor composed of IL12R1 and IL12R2 subunits. Binding to the receptor results in the rapid tyrosine phosphorylation of a number of cellular substrates including the JAK family kinases TYK2 and JAK2. In turn, recruited STAT4 gets phosphorylated and translocates to the nucleus where it regulates cytokine/growth factor responsive genes. As part of IL-35, plays essential roles in maintaining the immune homeostasis of the liver microenvironment and also functions as an immune-suppressive cytokine. Mediates biological events through unconventional receptors composed of IL12RB2 and gp130/IL6ST heterodimers or homodimers. Signaling requires the transcription factors STAT1 and STAT4, which form a unique heterodimer that binds to distinct DNA sites. In Equus caballus (Horse), this protein is Interleukin-12 subunit alpha (IL12A).